Consider the following 193-residue polypeptide: Bradykinin-potentiating and C-type natriuretic peptides (193 aa).

A signal peptide spans 1 to 23; sequence MFVSRLAASGLLLLALLALSLDG. The propeptide occupies 24–27; that stretch reads KPVH. Residues 25–173 are disordered; it reads PVHQSKPGRS…RMKGLAKKAM (149 aa). Gln-28 bears the Pyrrolidone carboxylic acid mark. Propeptides lie at residues 40–43 and 58–64; these read LSAQ and LSVQQWS. A Pyrrolidone carboxylic acid modification is found at Gln-65. The propeptide occupies 75 to 169; sequence VVVQPHESPA…GGARRMKGLA (95 aa). Over residues 95-123 the composition is skewed to low complexity; that stretch reads SPGPEAASGPAAPHRLPKSKGASATSAAS. Over residues 125-150 the composition is skewed to basic and acidic residues; the sequence is PMRDLRTDGKQERQKWGRMVQPDHHA. Positions 152–162 are enriched in gly residues; the sequence is PGGGGGGGGGA. Residues 163–173 are compositionally biased toward basic residues; sequence RRMKGLAKKAM. Cys-177 and Cys-193 are oxidised to a cystine.

In the N-terminal section; belongs to the bradykinin-potentiating peptide family. It in the C-terminal section; belongs to the natriuretic peptide family. In terms of tissue distribution, expressed by the venom gland.

It is found in the secreted. Bradykinin-potentiating peptide both inhibits the activity of the angiotensin-converting enzyme (ACE) and enhances the action of bradykinin by inhibiting the peptidases that inactivate it. It acts as an indirect hypotensive agent. Neither synthetic Tf1, nor synthetic Tf2 show bradykinin-potentiating effects. Functionally, has a vasorelaxant activity in rat aortic strips and a diuretic potency in anesthetized rats. In terms of biological role, has a vasorelaxant activity in rat aortic strips and a diuretic potency in anesthetized rats. Is as potent as Tf-CNP. The sequence is that of Bradykinin-potentiating and C-type natriuretic peptides from Protobothrops flavoviridis (Habu).